The sequence spans 249 residues: Type III pantothenate kinase (249 aa).

6–13 (DCGNSFIK) contributes to the ATP binding site. Substrate-binding positions include tyrosine 93 and 100–103 (GMDR). Aspartate 102 functions as the Proton acceptor in the catalytic mechanism. Aspartate 122 contributes to the K(+) binding site. Threonine 125 lines the ATP pocket. Threonine 181 lines the substrate pocket.

This sequence belongs to the type III pantothenate kinase family. Homodimer. Requires NH4(+) as cofactor. K(+) is required as a cofactor.

The protein resides in the cytoplasm. The enzyme catalyses (R)-pantothenate + ATP = (R)-4'-phosphopantothenate + ADP + H(+). Its pathway is cofactor biosynthesis; coenzyme A biosynthesis; CoA from (R)-pantothenate: step 1/5. Functionally, catalyzes the phosphorylation of pantothenate (Pan), the first step in CoA biosynthesis. The chain is Type III pantothenate kinase from Pseudomonas putida (strain W619).